A 376-amino-acid chain; its full sequence is MVERGPTVYLSGLREKHFGELFLNAYNVSESSSATQASSSQAASSELGLSEEGLKHIARYIEYFESRYNDIWLVFHHEGVSLSKLMYTVEEAEISSEKAEEASHGQILRPSKWWTWLKTTESGKEEMRRIIWQLLLGLKACHDRNITHRDIKPENMVICLEDIKSGRCLKGVPNGDQNFKTNMRIIDFGSALDEYTIKHLYGSTGPSRAEQTHDYAPPEAILNSSWHHGPTSLTLKYDMWSVGVVMLEMILGSPNVFEISSVTRALLDQHIRGWSENFKELAYKLRSLMEMCILIPGSSLKHGGASSKQGGISLASWKCSEEFFAEQIKSRDPLKIGFPNVWALRLVRGLLQWYPEDRVTVDEALQHPYFQPPPSS.

Residues 1-370 enclose the Protein kinase domain; the sequence is MVERGPTVYL…VDEALQHPYF (370 aa).

This sequence belongs to the protein kinase superfamily. Ser/Thr protein kinase family.

The polypeptide is Probable inactive protein kinase At3g63330 (Arabidopsis thaliana (Mouse-ear cress)).